Reading from the N-terminus, the 406-residue chain is Succinylornithine transaminase/acetylornithine aminotransferase (406 aa).

Residues G108–A109 and F141 each bind pyridoxal 5'-phosphate. R144 serves as a coordination point for N(2)-acetyl-L-ornithine. D226 to Q229 serves as a coordination point for pyridoxal 5'-phosphate. At K255 the chain carries N6-(pyridoxal phosphate)lysine. T283 serves as a coordination point for N(2)-acetyl-L-ornithine. Position 284 (T284) interacts with pyridoxal 5'-phosphate.

The protein belongs to the class-III pyridoxal-phosphate-dependent aminotransferase family. ArgD subfamily. As to quaternary structure, homodimer. Pyridoxal 5'-phosphate serves as cofactor.

It is found in the cytoplasm. It catalyses the reaction N(2)-succinyl-L-ornithine + 2-oxoglutarate = N-succinyl-L-glutamate 5-semialdehyde + L-glutamate. The enzyme catalyses N(2)-acetyl-L-ornithine + 2-oxoglutarate = N-acetyl-L-glutamate 5-semialdehyde + L-glutamate. The protein operates within amino-acid biosynthesis; L-arginine biosynthesis; N(2)-acetyl-L-ornithine from L-glutamate: step 4/4. It participates in amino-acid degradation; L-arginine degradation via AST pathway; L-glutamate and succinate from L-arginine: step 3/5. Functionally, transaminates both N(2)-acetylornithine and N(2)-succinylornithine. The protein is Succinylornithine transaminase/acetylornithine aminotransferase (aruC) of Pseudomonas aeruginosa (strain ATCC 15692 / DSM 22644 / CIP 104116 / JCM 14847 / LMG 12228 / 1C / PRS 101 / PAO1).